Consider the following 324-residue polypeptide: Cyclin-dependent kinase C-3 (324 aa).

The region spanning 27–320 is the Protein kinase domain; the sequence is FRRIRKIGEG…AHDALCAAYF (294 aa). Residues 33-41 and Lys-56 each bind ATP; that span reads IGEGTYGEV. Thr-37 carries the post-translational modification Phosphothreonine. At Tyr-38 the chain carries Phosphotyrosine. The active-site Proton acceptor is the Asp-160. Thr-193 carries the phosphothreonine modification.

It belongs to the protein kinase superfamily. CMGC Ser/Thr protein kinase family. CDC2/CDKX subfamily.

The enzyme catalyses L-seryl-[protein] + ATP = O-phospho-L-seryl-[protein] + ADP + H(+). It catalyses the reaction L-threonyl-[protein] + ATP = O-phospho-L-threonyl-[protein] + ADP + H(+). It carries out the reaction [DNA-directed RNA polymerase] + ATP = phospho-[DNA-directed RNA polymerase] + ADP + H(+). The protein is Cyclin-dependent kinase C-3 (CDKC-1) of Oryza sativa subsp. japonica (Rice).